The sequence spans 643 residues: Phosphomethylpyrimidine synthase (643 aa).

Residues asparagine 248, methionine 277, tyrosine 306, histidine 342, 362–364, 403–406, and glutamate 442 each bind substrate; these read SRG and DGLR. Histidine 446 is a binding site for Zn(2+). Tyrosine 469 serves as a coordination point for substrate. Histidine 510 provides a ligand contact to Zn(2+). [4Fe-4S] cluster-binding residues include cysteine 590, cysteine 593, and cysteine 598.

It belongs to the ThiC family. In terms of assembly, homodimer. [4Fe-4S] cluster is required as a cofactor.

It carries out the reaction 5-amino-1-(5-phospho-beta-D-ribosyl)imidazole + S-adenosyl-L-methionine = 4-amino-2-methyl-5-(phosphooxymethyl)pyrimidine + CO + 5'-deoxyadenosine + formate + L-methionine + 3 H(+). The protein operates within cofactor biosynthesis; thiamine diphosphate biosynthesis. In terms of biological role, catalyzes the synthesis of the hydroxymethylpyrimidine phosphate (HMP-P) moiety of thiamine from aminoimidazole ribotide (AIR) in a radical S-adenosyl-L-methionine (SAM)-dependent reaction. The sequence is that of Phosphomethylpyrimidine synthase from Paraburkholderia phytofirmans (strain DSM 17436 / LMG 22146 / PsJN) (Burkholderia phytofirmans).